A 129-amino-acid polypeptide reads, in one-letter code: uncharacterized protein (129 aa).

This is an uncharacterized protein from Saccharomyces cerevisiae (strain ATCC 204508 / S288c) (Baker's yeast).